Reading from the N-terminus, the 802-residue chain is Acetyl-CoA decarbonylase/synthase complex subunit alpha 1 (802 aa).

Residues Cys68, Cys71, Cys76, and Cys86 each contribute to the [4Fe-4S] cluster site. Position 109 (His109) interacts with CO. Residues His243, Cys271, and Cys310 each contribute to the [Ni-4Fe-4S] cluster site. 4Fe-4S ferredoxin-type domains lie at Asp395–Gly424 and Ser435–Ile464. The [4Fe-4S] cluster site is built by Cys405, Cys408, Cys411, Cys415, Cys444, Cys447, Cys450, and Cys454. The [Ni-4Fe-4S] cluster site is built by Cys512, Cys541, and Cys576.

The protein belongs to the Ni-containing carbon monoxide dehydrogenase family. As to quaternary structure, heterotetramer of two alpha and two epsilon subunits. The ACDS complex is made up of alpha, epsilon, beta, gamma and delta subunits with a probable stoichiometry of (alpha(2)epsilon(2))(4)-beta(8)-(gamma(1)delta(1))(8). [4Fe-4S] cluster serves as cofactor. It depends on [Ni-4Fe-4S] cluster as a cofactor.

It catalyses the reaction CO + 2 oxidized [2Fe-2S]-[ferredoxin] + H2O = 2 reduced [2Fe-2S]-[ferredoxin] + CO2 + 2 H(+). Part of the ACDS complex that catalyzes the reversible cleavage of acetyl-CoA, allowing autotrophic growth from CO(2). The alpha-epsilon subcomponent functions as a carbon monoxide dehydrogenase. The chain is Acetyl-CoA decarbonylase/synthase complex subunit alpha 1 from Archaeoglobus fulgidus (strain ATCC 49558 / DSM 4304 / JCM 9628 / NBRC 100126 / VC-16).